A 382-amino-acid polypeptide reads, in one-letter code: Galactokinase (382 aa).

34 to 37 contributes to the substrate binding site; the sequence is EHTD. Position 124 to 130 (124 to 130) interacts with ATP; sequence GAGLSSS. Serine 130 and glutamate 162 together coordinate Mg(2+). Aspartate 174 (proton acceptor) is an active-site residue. Tyrosine 223 lines the substrate pocket.

The protein belongs to the GHMP kinase family. GalK subfamily.

Its subcellular location is the cytoplasm. The catalysed reaction is alpha-D-galactose + ATP = alpha-D-galactose 1-phosphate + ADP + H(+). Its pathway is carbohydrate metabolism; galactose metabolism. Its function is as follows. Catalyzes the transfer of the gamma-phosphate of ATP to D-galactose to form alpha-D-galactose-1-phosphate (Gal-1-P). The protein is Galactokinase of Shigella boydii serotype 18 (strain CDC 3083-94 / BS512).